Reading from the N-terminus, the 93-residue chain is uncharacterized protein (93 aa).

This is an uncharacterized protein from Saimiriine herpesvirus 2 (strain 11) (SaHV-2).